Here is a 456-residue protein sequence, read N- to C-terminus: ATP synthase subunit beta 1 (456 aa).

152 to 159 serves as a coordination point for ATP; the sequence is GGAGVGKS.

The protein belongs to the ATPase alpha/beta chains family. In terms of assembly, F-type ATPases have 2 components, CF(1) - the catalytic core - and CF(0) - the membrane proton channel. CF(1) has five subunits: alpha(3), beta(3), gamma(1), delta(1), epsilon(1). CF(0) has three main subunits: a(1), b(2) and c(9-12). The alpha and beta chains form an alternating ring which encloses part of the gamma chain. CF(1) is attached to CF(0) by a central stalk formed by the gamma and epsilon chains, while a peripheral stalk is formed by the delta and b chains.

Its subcellular location is the cell membrane. The enzyme catalyses ATP + H2O + 4 H(+)(in) = ADP + phosphate + 5 H(+)(out). Its function is as follows. Produces ATP from ADP in the presence of a proton gradient across the membrane. The catalytic sites are hosted primarily by the beta subunits. In Listeria monocytogenes serotype 4b (strain F2365), this protein is ATP synthase subunit beta 1.